Here is a 150-residue protein sequence, read N- to C-terminus: Large ribosomal subunit protein bL9 (150 aa).

Belongs to the bacterial ribosomal protein bL9 family.

Its function is as follows. Binds to the 23S rRNA. This is Large ribosomal subunit protein bL9 from Alkalilimnicola ehrlichii (strain ATCC BAA-1101 / DSM 17681 / MLHE-1).